We begin with the raw amino-acid sequence, 392 residues long: MFQIGEALMGQGSELAHVDLMIGDKGGPVGQAFANGLTQLSAGHTPLLSVIRPNLPPKPSTLIIPKVTVKNMDQAAKIFGPAQSAVAKAVADSVEEGVIPKDQVEDLVVVASVFIHPEAQDYNKIYRYNYGATKLAIKRALEGFPDINKVLEESNKSTHAIMGFKVTRLWDPPYLQVAFDNPNLEFVLSAISQIPNSDHVIIEAGTPLIKRYGVDVISKIRQVRPDAFIVADLKTLDTGNLEARMVADAAGDAIVVSALAPISTIDKLIEEAHKTGIYAVMDTLNQHDPISVLKQLKVMPDVIELHRGIDIEGTEHAWGNIGEIKKIAPKALIAVAGGVRLDKVPVALGQGADILVVGRAITNAKDVREVAEQFINALNKPEIDQFRVMTDF.

The tract at residues 1–161 (MFQIGEALMG…EESNKSTHAI (161 aa)) is formaldehyde-activating enzyme. His17 functions as the Proton donor in the catalytic mechanism. Substrate is bound by residues Asp19, Leu48, Lys66, Thr68, and Gln83. A 3-hexulose-6-phosphate synthase region spans residues 162 to 392 (MGFKVTRLWD…IDQFRVMTDF (231 aa)).

In the N-terminal section; belongs to the formaldehyde-activating enzyme family. This sequence in the C-terminal section; belongs to the HPS/KGPDC family. HPS subfamily.

The catalysed reaction is 5,6,7,8-tetrahydromethanopterin + formaldehyde = 5,10-methylenetetrahydromethanopterin + H2O. It carries out the reaction D-ribulose 5-phosphate + formaldehyde = D-arabino-hex-3-ulose 6-phosphate. Its pathway is carbohydrate biosynthesis; D-ribose 5-phosphate biosynthesis. Its function is as follows. Catalyzes the condensation of formaldehyde with tetrahydromethanopterin (H(4)MPT) to 5,10-methylenetetrahydromethanopterin. Catalyzes the reversible formation of ribulose-5-phosphate and formaldehyde from 3-hexulose-6-phosphate. This chain is Bifunctional enzyme Fae/Hps, found in Methanosarcina acetivorans (strain ATCC 35395 / DSM 2834 / JCM 12185 / C2A).